A 90-amino-acid polypeptide reads, in one-letter code: Defensin-like protein 178 (90 aa).

An N-terminal signal peptide occupies residues 1–23 (MAKATSSLVVPIIFLVIFALVEQ). Disulfide bonds link Cys-27–Cys-66, Cys-36–Cys-55, Cys-39–Cys-60, and Cys-43–Cys-62.

This sequence belongs to the DEFL family.

Its subcellular location is the secreted. The protein is Defensin-like protein 178 (LCR64) of Arabidopsis thaliana (Mouse-ear cress).